A 1117-amino-acid chain; its full sequence is Reverse gyrase (1117 aa).

Residues 3-42 form an RG N-terminal-type zinc finger; the sequence is LATGAKYYHSCINCGGINTDTRNEKGLPCEVCLPFEDGDV. Residues cysteine 13, cysteine 16, cysteine 31, and cysteine 34 each contribute to the Zn(2+) site. ATP-binding positions include glutamine 84 and 101–108; that span reads APTGVGKT. Residues 88–284 form the Helicase ATP-binding domain; sequence AKRLLLSKSF…LFRELLGFEI (197 aa). The DEAD box motif lies at 206 to 209; the sequence is DDVD. The interval 551–1117 is topoisomerase I; the sequence is KDMKSRMIIV…EELNEILIKN (567 aa). The 158-residue stretch at 555-712 folds into the Toprim domain; it reads SRMIIVESPT…NVQRIEMHEI (158 aa). Glutamate 561 contributes to the Mg(2+) binding site. The RG C-terminal-type zinc-finger motif lies at 631 to 658; that stretch reads IKRCSSCGAQFTDELPRCPYCNSDKIDD. The Zn(2+) site is built by cysteine 634, cysteine 637, cysteine 648, and cysteine 651. Residue aspartate 681 participates in Mg(2+) binding. The region spanning 728–1114 is the Topo IA-type catalytic domain; sequence DVNLVKSQIV…NLYEELNEIL (387 aa). Catalysis depends on tyrosine 864, which acts as the O-(5'-phospho-DNA)-tyrosine intermediate.

This sequence in the N-terminal section; belongs to the DEAD box helicase family. DDVD subfamily. The protein in the C-terminal section; belongs to the type IA topoisomerase family. As to quaternary structure, monomer. Zn(2+) is required as a cofactor. Requires Mg(2+) as cofactor.

The protein resides in the cytoplasm. The catalysed reaction is ATP + H2O = ADP + phosphate + H(+). Functionally, modifies the topological state of DNA by introducing positive supercoils in an ATP-dependent process, increasing the linking number in steps of +1; also positively supercoils with dATP and ATP-gamma-S. With UTP or dTTP relaxes negatively supercoiled DNA, in the absence of any nucleotide partially relaxes negative supercoils. In the absence of nucleotide has a higher affinity for dsDNA with a single-stranded tail than dsDNA or ssDNA. Has an ATPase activity in the absence of DNA. Binds to single-stranded DNA, transiently cleaves and then rejoins the ends, introducing a positive supercoil in the process. The scissile phosphodiester is attacked by the catalytic tyrosine of the enzyme, resulting in the formation of a DNA-(5'-phosphotyrosyl)-enzyme intermediate. Probably involved in rewinding DNA strands in regions of the chromosome that have opened up to allow replication, transcription, DNA repair and/or for DNA protection. This Caldanaerobacter subterraneus subsp. tengcongensis (strain DSM 15242 / JCM 11007 / NBRC 100824 / MB4) (Thermoanaerobacter tengcongensis) protein is Reverse gyrase.